The primary structure comprises 498 residues: Alpha-amylase A (498 aa).

The first 21 residues, 1–21 (MMVAWWSLFLYGLQVAAPALA), serve as a signal peptide directing secretion. Cysteines 51 and 59 form a disulfide. 2 residues coordinate substrate: Q56 and W104. Residue N142 participates in Ca(2+) binding. H143 is a substrate binding site. C171 and C185 are oxidised to a cystine. Residues E183 and D196 each coordinate Ca(2+). A glycan (N-linked (GlcNAc...) asparagine) is linked at N218. R225 is a substrate binding site. Ca(2+) is bound by residues D227, H231, and E251. The Nucleophile role is filled by D227. 230-231 (KH) lines the substrate pocket. The active-site Proton donor is E251. A substrate-binding site is contributed by G255. A disulfide bond links C261 and C304. The substrate site is built by D318 and R365. C461 and C496 form a disulfide bridge.

The protein belongs to the glycosyl hydrolase 13 family. Ca(2+) is required as a cofactor.

The enzyme catalyses Endohydrolysis of (1-&gt;4)-alpha-D-glucosidic linkages in polysaccharides containing three or more (1-&gt;4)-alpha-linked D-glucose units.. The polypeptide is Alpha-amylase A (amyA) (Aspergillus awamori (Black koji mold)).